A 162-amino-acid polypeptide reads, in one-letter code: Endoribonuclease YbeY (162 aa).

His117, His121, and His127 together coordinate Zn(2+).

The protein belongs to the endoribonuclease YbeY family. Zn(2+) is required as a cofactor.

The protein resides in the cytoplasm. Single strand-specific metallo-endoribonuclease involved in late-stage 70S ribosome quality control and in maturation of the 3' terminus of the 16S rRNA. This is Endoribonuclease YbeY from Francisella tularensis subsp. tularensis (strain WY96-3418).